The following is a 458-amino-acid chain: Probable threonine--tRNA ligase, cytoplasmic (458 aa).

The region spanning 41–104 is the TGS domain; the sequence is DPIKITLLPD…EGDCSLEIFG (64 aa).

This sequence belongs to the class-II aminoacyl-tRNA synthetase family.

The protein localises to the cytoplasm. The catalysed reaction is tRNA(Thr) + L-threonine + ATP = L-threonyl-tRNA(Thr) + AMP + diphosphate + H(+). The polypeptide is Probable threonine--tRNA ligase, cytoplasmic (Arabidopsis thaliana (Mouse-ear cress)).